The chain runs to 251 residues: Ubiquinone/menaquinone biosynthesis C-methyltransferase UbiE (251 aa).

Residues T74, D95, 123–124 (NA), and S140 contribute to the S-adenosyl-L-methionine site.

Belongs to the class I-like SAM-binding methyltransferase superfamily. MenG/UbiE family.

It catalyses the reaction a 2-demethylmenaquinol + S-adenosyl-L-methionine = a menaquinol + S-adenosyl-L-homocysteine + H(+). It carries out the reaction a 2-methoxy-6-(all-trans-polyprenyl)benzene-1,4-diol + S-adenosyl-L-methionine = a 5-methoxy-2-methyl-3-(all-trans-polyprenyl)benzene-1,4-diol + S-adenosyl-L-homocysteine + H(+). Its pathway is quinol/quinone metabolism; menaquinone biosynthesis; menaquinol from 1,4-dihydroxy-2-naphthoate: step 2/2. It functions in the pathway cofactor biosynthesis; ubiquinone biosynthesis. In terms of biological role, methyltransferase required for the conversion of demethylmenaquinol (DMKH2) to menaquinol (MKH2) and the conversion of 2-polyprenyl-6-methoxy-1,4-benzoquinol (DDMQH2) to 2-polyprenyl-3-methyl-6-methoxy-1,4-benzoquinol (DMQH2). The sequence is that of Ubiquinone/menaquinone biosynthesis C-methyltransferase UbiE from Serratia proteamaculans (strain 568).